A 759-amino-acid chain; its full sequence is Probable Na(+)/H(+) antiporter C3A11.09 (759 aa).

11 helical membrane passes run 12–32, 36–56, 105–125, 133–153, 172–192, 206–226, 244–264, 295–315, 319–339, 361–381, and 415–435; these read HLAY…SLII, LFLG…PYVA, MLLP…YALI, SLAI…SIVG, ESGC…YLII, IIIL…GVIA, FLVF…IIGV, VIDL…MPWP, MPHM…ILIA, ALFA…CLVA, and VVCF…AFFM. T442 carries the post-translational modification Phosphothreonine. S446 is modified (phosphoserine). Phosphothreonine is present on T448. 5 stretches are compositionally biased toward basic and acidic residues: residues 514 to 529, 537 to 547, 590 to 601, 622 to 647, and 655 to 671; these read LREE…HYDA, YESRQPRRSNE, IDEKLAQGDPKA, NLHE…ENHR, and SESH…RREQ. Disordered stretches follow at residues 514–558, 578–606, and 622–759; these read LREE…NPGD, SHTS…SFGR, and NLHE…RAWE. A compositionally biased stretch (polar residues) spans 696 to 713; the sequence is NENNESSSDTRNGLLSDN. N-linked (GlcNAc...) asparagine glycans are attached at residues N699 and N713. The span at 724–733 shows a compositional bias: low complexity; the sequence is RAPSAAVSSE. S735 bears the Phosphoserine mark.

Belongs to the fungal Na(+)/H(+) exchanger family.

The protein localises to the membrane. Its function is as follows. Sodium export from cell, takes up external protons in exchange for internal sodium ions. The polypeptide is Probable Na(+)/H(+) antiporter C3A11.09 (sod22) (Schizosaccharomyces pombe (strain 972 / ATCC 24843) (Fission yeast)).